The sequence spans 503 residues: Probable mitochondrial-processing peptidase subunit alpha-1, mitochondrial (503 aa).

The N-terminal 59 residues, 1–59 (MYRTAASRARALKGVLTRSLRPARYASSSAVAETSSSTPAYLSWLSGGSRAALTSLDMP), are a transit peptide targeting the mitochondrion.

Belongs to the peptidase M16 family. Heterodimer of alpha and beta subunits, forming the mitochondrial processing protease (MPP) in which subunit alpha is involved in substrate recognition and binding and subunit beta is the catalytic subunit. Component of the ubiquinol-cytochrome c oxidoreductase (cytochrome b-c1 complex, complex III, CIII), a multisubunit enzyme composed of 10 subunits. The complex is composed of 3 respiratory subunits cytochrome b (MT-CYB), cytochrome c1 (CYC1-1 or CYC1-2) and Rieske protein (UCR1-1 or UCR1-2), 2 core protein subunits MPPalpha1 (or MPPalpha2) and MPPB, and 5 low-molecular weight protein subunits QCR7-1 (or QCR7-2), UCRQ-1 (or UCRQ-2), QCR9, UCRY and probably QCR6-1 (or QCR6-2). The complex exists as an obligatory dimer and forms supercomplexes (SCs) in the inner mitochondrial membrane with NADH-ubiquinone oxidoreductase (complex I, CI), resulting in different assemblies (supercomplexes SCI(1)III(2) and SCI(2)III(4)).

It is found in the mitochondrion matrix. It localises to the mitochondrion inner membrane. Functionally, substrate recognition and binding subunit of the essential mitochondrial processing protease (MPP), which cleaves the mitochondrial sequence off newly imported precursors proteins. Its function is as follows. Component of the ubiquinol-cytochrome c oxidoreductase, a multisubunit transmembrane complex that is part of the mitochondrial electron transport chain which drives oxidative phosphorylation. The respiratory chain contains 3 multisubunit complexes succinate dehydrogenase (complex II, CII), ubiquinol-cytochrome c oxidoreductase (cytochrome b-c1 complex, complex III, CIII) and cytochrome c oxidase (complex IV, CIV), that cooperate to transfer electrons derived from NADH and succinate to molecular oxygen, creating an electrochemical gradient over the inner membrane that drives transmembrane transport and the ATP synthase. The cytochrome b-c1 complex catalyzes electron transfer from ubiquinol to cytochrome c, linking this redox reaction to translocation of protons across the mitochondrial inner membrane, with protons being carried across the membrane as hydrogens on the quinol. In the process called Q cycle, 2 protons are consumed from the matrix, 4 protons are released into the intermembrane space and 2 electrons are passed to cytochrome c. The polypeptide is Probable mitochondrial-processing peptidase subunit alpha-1, mitochondrial (MPPalpha1) (Arabidopsis thaliana (Mouse-ear cress)).